The chain runs to 400 residues: MRIGTPNSPSAVRVMLLGSGELGKEVAISLQRYGVEVIAVDRYAGAPAQQVAHRSHVVDMTDPGAIHRLVEFERPHFVVPEIEAIATDALVEIERAGLAEVVPNARAVQLTMNREGIRRLAAEKLGLPTSPYAFADSCAALAEAAAKIGFPCFVKPVMSSSGKGQSLLESPSDVQAAWDHARQGGRVGASRVIVEGRIDFDFEITLLTVRAPVSGGDAGIAFCEPVGHRQQAGDYVESWQPQSLNPKARERAEAIARTVVDALGGRGLFGVELFVRGDEVWFSEVSPRPHDTGMVTMVSQAQNEFELHVRAILGLPVDSSLRRPGASAVIYGGVAAEGIAFEGLERALAVPESEVRLFGKPEAHPRRRMGVALAAADTVEEARRRAVLAASRVRPVKIPA.

N(1)-(5-phospho-beta-D-ribosyl)glycinamide contacts are provided by residues 21 to 22 (EL) and Glu81. Residues Arg114, Lys155, 160-165 (SSGKGQ), 195-198 (EGRI), and Glu203 each bind ATP. The region spanning 119 to 313 (RLAAEKLGLP…EFELHVRAIL (195 aa)) is the ATP-grasp domain. 2 residues coordinate Mg(2+): Glu272 and Glu284. N(1)-(5-phospho-beta-D-ribosyl)glycinamide is bound by residues Asp291, Lys360, and 367 to 368 (RR).

The protein belongs to the PurK/PurT family. As to quaternary structure, homodimer.

It carries out the reaction N(1)-(5-phospho-beta-D-ribosyl)glycinamide + formate + ATP = N(2)-formyl-N(1)-(5-phospho-beta-D-ribosyl)glycinamide + ADP + phosphate + H(+). The protein operates within purine metabolism; IMP biosynthesis via de novo pathway; N(2)-formyl-N(1)-(5-phospho-D-ribosyl)glycinamide from N(1)-(5-phospho-D-ribosyl)glycinamide (formate route): step 1/1. Functionally, involved in the de novo purine biosynthesis. Catalyzes the transfer of formate to 5-phospho-ribosyl-glycinamide (GAR), producing 5-phospho-ribosyl-N-formylglycinamide (FGAR). Formate is provided by PurU via hydrolysis of 10-formyl-tetrahydrofolate. In Methylococcus capsulatus (strain ATCC 33009 / NCIMB 11132 / Bath), this protein is Formate-dependent phosphoribosylglycinamide formyltransferase.